We begin with the raw amino-acid sequence, 79 residues long: Small ribosomal subunit protein bS18 (79 aa).

It belongs to the bacterial ribosomal protein bS18 family. Part of the 30S ribosomal subunit. Forms a tight heterodimer with protein bS6.

Its function is as follows. Binds as a heterodimer with protein bS6 to the central domain of the 16S rRNA, where it helps stabilize the platform of the 30S subunit. This Renibacterium salmoninarum (strain ATCC 33209 / DSM 20767 / JCM 11484 / NBRC 15589 / NCIMB 2235) protein is Small ribosomal subunit protein bS18.